The chain runs to 579 residues: Effector protein HopAB3 (579 aa).

Disordered stretches follow at residues 1–140, 214–294, and 384–408; these read MAGI…TGAV, VRQQ…NQVP, and PARAQAPRPAVPVAPATVSRRPDSA. Positions 1–336 are host recognition; Pto interaction; it reads MAGINGAGPS…LRAALERHIL (336 aa). Low complexity-rich tracts occupy residues 23–39, 89–101, 219–248, 266–281, and 384–402; these read ASGGAHGSSSGASSSNS, RPQESAEAAAPQA, ASAPPRTAARSSVRTPERSTVPPTSTESSS, NQRRPSSASNASASQR, and PARAQAPRPAVPVAPATVS. Positions 337 to 579 are E3 ubiquitin-protein ligase; it reads HRRPIPMDIA…IAKYAFRIVP (243 aa).

The protein belongs to the HopAB family. As to quaternary structure, interacts physically with plant cell Pto. Post-translationally, auto-ubiquitinated.

The protein resides in the secreted. Its function is as follows. Effector protein involved in gene-for-gene resistance in tomato plants. It is recognized by the host Pto resistance protein and elicits Pto and Prf-dependent hypersensitive response (HR) and programmed cell death (PCD), resulting in host immunity. In susceptible plants, acts as a virulence factor by suppressing PCD and HR-based plant immunity. This function requires its E3 ubiquitin ligase activity probably by recruiting E2 enzymes and transferring ubiquitin molecules to cellular proteins involved in regulation of PCD and targeting them for degradation. Enhances the development of disease symptoms and bacterial growth. This chain is Effector protein HopAB3 (hopAB3), found in Pseudomonas syringae pv. tomato.